We begin with the raw amino-acid sequence, 610 residues long: E3 ubiquitin-protein ligase hrd-1 (610 aa).

Positions 1-23 are cleaved as a signal peptide; the sequence is MRVSAGLMIGGSCVATAATILNA. Residues 24–41 lie on the Lumenal side of the membrane; it reads FLINKQFYPSIVYLSKSN. The helical transmembrane segment at 42–62 threads the bilayer; it reads ASMAVIYVQGIVLVYLMFQLL. Topologically, residues 63-99 are cytoplasmic; it reads KSILFGDLRAAEAEHLSERTWHAVLETCLAFTVFRDD. Residues 100-120 traverse the membrane as a helical segment; it reads FSAIFVMQFIGLLFIKCFHWL. The Lumenal portion of the chain corresponds to 121–144; the sequence is ADDRVDMMERSPVITLRFHLRMMT. The helical transmembrane segment at 145–165 threads the bilayer; it reads VLAALGFADSYFVSSAYFTTI. Residues 166–170 are Cytoplasmic-facing; the sequence is TRGAS. The helical transmembrane segment at 171 to 191 threads the bilayer; that stretch reads AQIVFGFEYAILLALVLHVTI. At 192–215 the chain is on the lumenal side; the sequence is KYLLHMHDLRNPQSWDNKAVYLLY. A helical membrane pass occupies residues 216-236; sequence AELFINLIRCLLYGFFAVVML. Topologically, residues 237-610 are cytoplasmic; it reads RVHTFPLFSV…ARLLGENANQ (374 aa). An RING-type; atypical zinc finger spans residues 292 to 333; that stretch reads CIICREEMTVDASPKRLPCSHVFHAHCLRSWFQRQQTCPTCR. 3 disordered regions span residues 386 to 408, 452 to 480, and 521 to 610; these read QPAGAGGAQPGAAQAGGQPGPFP, VNTTQGTSSETPPVNPSYSQLSTEELRRM, and RPVV…NANQ. Over residues 452 to 474 the composition is skewed to polar residues; that stretch reads VNTTQGTSSETPPVNPSYSQLST. A compositionally biased stretch (low complexity) spans 560-589; it reads TESPSTSSTAPSTSSPVTASSTPTTSSTRT.

It belongs to the HRD1 family. As to quaternary structure, homodimer.

It localises to the endoplasmic reticulum membrane. It catalyses the reaction S-ubiquitinyl-[E2 ubiquitin-conjugating enzyme]-L-cysteine + [acceptor protein]-L-lysine = [E2 ubiquitin-conjugating enzyme]-L-cysteine + N(6)-ubiquitinyl-[acceptor protein]-L-lysine.. Its pathway is protein modification; protein ubiquitination. Acts as an E3 ubiquitin-protein ligase which accepts ubiquitin specifically from endoplasmic reticulum-associated ubc-7 E2 ligase and transfers it to substrates, promoting their degradation. Component of the endoplasmic reticulum quality control (ERQC) system, which is also called the ER-associated degradation (ERAD) system, involved in ubiquitin-dependent degradation of misfolded endoplasmic reticulum proteins. Also promotes the degradation of normal but naturally short-lived proteins. Protects cells from ER stress-induced apoptosis. Thought to play a role together with hsp-3 in developmental growth and function of intestinal cells and to play a role together with hsp-4 in gonad formation. Plays a key role in the degradation of the potassium channel slo-1, perhaps acting directly, in targeting slo-1 to the ER-associated degradation pathway (ERAD), and also indirectly, via activation of the transcription factor skn-1, which mediates proteasomal homeostasis. The chain is E3 ubiquitin-protein ligase hrd-1 (sel-11) from Caenorhabditis elegans.